A 453-amino-acid polypeptide reads, in one-letter code: Chromosomal replication initiator protein DnaA (453 aa).

Positions 1 to 79 (MKSLIQEKWN…KTAIAEVINQ (79 aa)) are domain I, interacts with DnaA modulators. The domain II stretch occupies residues 79-111 (QDFEIEFVLLSQTKAEEKVQTQAPNKIKNESLS). A domain III, AAA+ region region spans residues 112 to 330 (YLNPRYTFDT…GALTKIVALS (219 aa)). The ATP site is built by Gly-156, Gly-158, Lys-159, and Thr-160. The domain IV, binds dsDNA stretch occupies residues 331-453 (RLKKKEVDVI…VLIKKINPTP (123 aa)).

The protein belongs to the DnaA family. Oligomerizes as a right-handed, spiral filament on DNA at oriC.

Its subcellular location is the cytoplasm. Plays an essential role in the initiation and regulation of chromosomal replication. ATP-DnaA binds to the origin of replication (oriC) to initiate formation of the DNA replication initiation complex once per cell cycle. Binds the DnaA box (a 9 base pair repeat at the origin) and separates the double-stranded (ds)DNA. Forms a right-handed helical filament on oriC DNA; dsDNA binds to the exterior of the filament while single-stranded (ss)DNA is stabiized in the filament's interior. The ATP-DnaA-oriC complex binds and stabilizes one strand of the AT-rich DNA unwinding element (DUE), permitting loading of DNA polymerase. After initiation quickly degrades to an ADP-DnaA complex that is not apt for DNA replication. Binds acidic phospholipids. The protein is Chromosomal replication initiator protein DnaA of Lachnoclostridium phytofermentans (strain ATCC 700394 / DSM 18823 / ISDg) (Clostridium phytofermentans).